Consider the following 153-residue polypeptide: Superoxide dismutase [Cu-Zn] (153 aa).

Cu cation is bound by residues His-45, His-47, and His-62. Cys-56 and Cys-145 are oxidised to a cystine. Zn(2+) contacts are provided by His-62, His-70, His-79, and Asp-82. His-119 contacts Cu cation.

It belongs to the Cu-Zn superoxide dismutase family. In terms of assembly, homodimer. The cofactor is Cu cation. Zn(2+) is required as a cofactor.

The protein localises to the cytoplasm. It carries out the reaction 2 superoxide + 2 H(+) = H2O2 + O2. Functionally, destroys radicals which are normally produced within the cells and which are toxic to biological systems. The chain is Superoxide dismutase [Cu-Zn] from Drosophila orena (Fruit fly).